Consider the following 390-residue polypeptide: Aspartate beta-hydroxylase domain-containing protein 1 (390 aa).

The interval methionine 1–proline 54 is disordered. At methionine 1–proline 72 the chain is on the cytoplasmic side. The span at glycine 41–asparagine 51 shows a compositional bias: gly residues. A helical membrane pass occupies residues leucine 73–cysteine 95. Residues tyrosine 96–proline 390 lie on the Lumenal side of the membrane. Residues arginine 116–glutamate 143 form a disordered region. Positions proline 128–glycine 137 are enriched in gly residues. Position 129 is a phosphoserine (serine 129).

Belongs to the aspartyl/asparaginyl beta-hydroxylase family.

The protein localises to the membrane. The sequence is that of Aspartate beta-hydroxylase domain-containing protein 1 (ASPHD1) from Homo sapiens (Human).